The following is a 90-amino-acid chain: MGELPYKIQELKLRRIEELNNKLRNELARERMTASNACLSIIDYTSTHKDYAVPEVWGYPMVGENPYNNTMRKNNFARSHEETSACCTIM.

A lipid anchor (S-palmitoyl cysteine) is attached at cysteine 86. Cysteine 87 bears the Cysteine methyl ester mark. Residue cysteine 87 is the site of S-farnesyl cysteine attachment. The propeptide at 88–90 is removed in mature form; it reads TIM.

Belongs to the G protein gamma family. G proteins are composed of 3 units, alpha, beta and gamma.

It localises to the membrane. The chain is Guanine nucleotide-binding protein subunit gamma from Kluyveromyces lactis (strain ATCC 8585 / CBS 2359 / DSM 70799 / NBRC 1267 / NRRL Y-1140 / WM37) (Yeast).